Consider the following 97-residue polypeptide: Large ribosomal subunit protein uL23 (97 aa).

Belongs to the universal ribosomal protein uL23 family. As to quaternary structure, part of the 50S ribosomal subunit. Contacts protein L29, and trigger factor when it is bound to the ribosome.

In terms of biological role, one of the early assembly proteins it binds 23S rRNA. One of the proteins that surrounds the polypeptide exit tunnel on the outside of the ribosome. Forms the main docking site for trigger factor binding to the ribosome. This Brucella anthropi (strain ATCC 49188 / DSM 6882 / CCUG 24695 / JCM 21032 / LMG 3331 / NBRC 15819 / NCTC 12168 / Alc 37) (Ochrobactrum anthropi) protein is Large ribosomal subunit protein uL23.